A 356-amino-acid chain; its full sequence is UDP-N-acetylglucosamine--N-acetylmuramyl-(pentapeptide) pyrophosphoryl-undecaprenol N-acetylglucosamine transferase (356 aa).

Positions 198 and 289 each coordinate UDP-N-acetyl-alpha-D-glucosamine.

It belongs to the glycosyltransferase 28 family. MurG subfamily.

It localises to the cell membrane. The catalysed reaction is Mur2Ac(oyl-L-Ala-gamma-D-Glu-L-Lys-D-Ala-D-Ala)-di-trans,octa-cis-undecaprenyl diphosphate + UDP-N-acetyl-alpha-D-glucosamine = beta-D-GlcNAc-(1-&gt;4)-Mur2Ac(oyl-L-Ala-gamma-D-Glu-L-Lys-D-Ala-D-Ala)-di-trans,octa-cis-undecaprenyl diphosphate + UDP + H(+). Its pathway is cell wall biogenesis; peptidoglycan biosynthesis. Functionally, cell wall formation. Catalyzes the transfer of a GlcNAc subunit on undecaprenyl-pyrophosphoryl-MurNAc-pentapeptide (lipid intermediate I) to form undecaprenyl-pyrophosphoryl-MurNAc-(pentapeptide)GlcNAc (lipid intermediate II). This chain is UDP-N-acetylglucosamine--N-acetylmuramyl-(pentapeptide) pyrophosphoryl-undecaprenol N-acetylglucosamine transferase, found in Streptococcus thermophilus (strain CNRZ 1066).